Reading from the N-terminus, the 692-residue chain is UvrABC system protein B (692 aa).

A Helicase ATP-binding domain is found at 32-187 (ENIENGEKAQ…LLNDLVGIQF (156 aa)). 45–52 (GATGTGKT) contacts ATP. A Beta-hairpin motif is present at residues 98-121 (YYDYYQPEAYVPSSDTYIEKDSSV). The Helicase C-terminal domain occupies 436–631 (QIDDLVGEIH…TIKKEIRDLI (196 aa)). Residues 656 to 691 (KALVKKLEKEMQQAAAALDFEGAAQLRDMVLELRAM) enclose the UVR domain.

The protein belongs to the UvrB family. In terms of assembly, forms a heterotetramer with UvrA during the search for lesions. Interacts with UvrC in an incision complex.

The protein localises to the cytoplasm. Functionally, the UvrABC repair system catalyzes the recognition and processing of DNA lesions. A damage recognition complex composed of 2 UvrA and 2 UvrB subunits scans DNA for abnormalities. Upon binding of the UvrA(2)B(2) complex to a putative damaged site, the DNA wraps around one UvrB monomer. DNA wrap is dependent on ATP binding by UvrB and probably causes local melting of the DNA helix, facilitating insertion of UvrB beta-hairpin between the DNA strands. Then UvrB probes one DNA strand for the presence of a lesion. If a lesion is found the UvrA subunits dissociate and the UvrB-DNA preincision complex is formed. This complex is subsequently bound by UvrC and the second UvrB is released. If no lesion is found, the DNA wraps around the other UvrB subunit that will check the other stand for damage. The polypeptide is UvrABC system protein B (Lactococcus lactis subsp. cremoris (strain SK11)).